The primary structure comprises 336 residues: Foldase protein PrsA (336 aa).

Residues 1 to 22 (MKSAKKLLSVLCLGIFILTFTA) form the signal peptide. Cysteine 23 is lipidated: N-palmitoyl cysteine. Cysteine 23 carries S-diacylglycerol cysteine lipidation. The region spanning 194–286 (PNTMNVSHIL…WGYHIIKINS (93 aa)) is the PpiC domain.

This sequence belongs to the PrsA family.

The protein localises to the cell membrane. It carries out the reaction [protein]-peptidylproline (omega=180) = [protein]-peptidylproline (omega=0). Its function is as follows. Plays a major role in protein secretion by helping the post-translocational extracellular folding of several secreted proteins. This Clostridium botulinum (strain Langeland / NCTC 10281 / Type F) protein is Foldase protein PrsA.